The following is a 45-amino-acid chain: Small polypeptide DEVIL 2 (45 aa).

A required for DVL/RTFL small polypeptide activity region spans residues 14–45; that stretch reads SQSRRLGKYLKEQKGRIYIIRRCVMMLLCSHD. Residues 17–33 form a helical membrane-spanning segment; that stretch reads RRLGKYLKEQKGRIYII.

Belongs to the DVL/RTFL small polypeptides family. In terms of tissue distribution, mostly expressed in stems and, to a lower extent, in roots and leaves.

It localises to the cell membrane. Small polypeptide acting as a regulatory molecule which coordinates cellular responses required for differentiation, growth and development, including leaves shape, pedicule elongation, inflorescence organization and fruit maturation, probably by restricting polar cell proliferation in lateral organs and coordinating socket cell recruitment and differentiation at trichome sites. This Arabidopsis thaliana (Mouse-ear cress) protein is Small polypeptide DEVIL 2.